Consider the following 184-residue polypeptide: Large ribosomal subunit protein uL6 (184 aa).

The protein belongs to the universal ribosomal protein uL6 family. In terms of assembly, part of the 50S ribosomal subunit.

This protein binds to the 23S rRNA, and is important in its secondary structure. It is located near the subunit interface in the base of the L7/L12 stalk, and near the tRNA binding site of the peptidyltransferase center. This Pyrococcus abyssi (strain GE5 / Orsay) protein is Large ribosomal subunit protein uL6.